Consider the following 850-residue polypeptide: Trimethylguanosine synthase (850 aa).

The segment at 54–85 (NNAGDRVTEEEEDDHSSGTTESHSADEGDLDP) is disordered. Position 61 is a phosphothreonine (Thr61). Residues Ser92 and Ser152 each carry the phosphoserine modification. 3 disordered regions span residues 278 to 311 (DQNAESSLKADGTTLSSSPNTAEDESLGSNDNDH), 327 to 454 (EVEQ…GGIP), and 523 to 566 (ISQE…PENC). The segment covering 363–374 (TPKESDISENRS) has biased composition (basic and acidic residues). Residues 375-390 (SDQPAQELQESSGTNT) show a composition bias toward polar residues. Ser405 and Ser431 each carry phosphoserine. Acidic residues predominate over residues 424-435 (DIDENPDSEVDD). Residues 548–562 (SMEKTDGLMETRDPE) show a composition bias toward basic and acidic residues. Position 571 is a phosphoserine (Ser571). Positions 595 to 628 (TEGVANSPRAEAEVEIKKKKKKKKKNKNKKINGL) are disordered. The span at 611-624 (KKKKKKKKKNKNKK) shows a compositional bias: basic residues. An S-adenosyl-L-methionine-binding site is contributed by Asp713.

Belongs to the methyltransferase superfamily. Trimethylguanosine synthase family. As to quaternary structure, may form homooligomers. Interacts with CREBBP/CBP, EED/WAIT1, EP300/P300, NCOA6/PRIP, PPARBP/PBP and SMN. In terms of tissue distribution, a 55 kDa isoform is widely expressed while a 90 kDa isoform is detected exclusively in brain and testis (at protein level).

It localises to the cytoplasm. It is found in the nucleus. The protein localises to the cajal body. Its subcellular location is the nucleolus. It catalyses the reaction a 5'-end (N(7)-methyl 5'-triphosphoguanosine)-ribonucleoside in snRNA + S-adenosyl-L-methionine = a 5'-end (N(2),N(7)-dimethyl 5'-triphosphoguanosine)-ribonucleoside in snRNA + S-adenosyl-L-homocysteine + H(+). The enzyme catalyses a 5'-end (N(7)-methyl 5'-triphosphoguanosine)-ribonucleoside in snoRNA + S-adenosyl-L-methionine = a 5'-end (N(2),N(7)-dimethyl 5'-triphosphoguanosine)-ribonucleoside in snoRNA + S-adenosyl-L-homocysteine + H(+). It carries out the reaction a 5'-end (N(2),N(7)-dimethyl 5'-triphosphoguanosine)-ribonucleoside in snRNA + S-adenosyl-L-methionine = a 5'-end (N(2),N(2),N(7)-trimethyl 5'-triphosphoguanosine)-ribonucleoside in snRNA + S-adenosyl-L-homocysteine + H(+). The catalysed reaction is a 5'-end (N(2),N(7)-dimethyl 5'-triphosphoguanosine)-ribonucleoside in snoRNA + S-adenosyl-L-methionine = a 5'-end (N(2),N(2),N(7)-trimethyl 5'-triphosphoguanosine)-ribonucleoside in snoRNA + S-adenosyl-L-homocysteine + H(+). Its function is as follows. Catalyzes the 2 serial methylation steps for the conversion of the 7-monomethylguanosine (m(7)G) caps of snRNAs and snoRNAs to a 2,2,7-trimethylguanosine (m(2,2,7)G) cap structure. The enzyme is specific for guanine, and N7 methylation must precede N2 methylation. Hypermethylation of the m7G cap of U snRNAs leads to their concentration in nuclear foci, their colocalization with coilin and the formation of canonical Cajal bodies (CBs). Plays a role in transcriptional regulation. In Rattus norvegicus (Rat), this protein is Trimethylguanosine synthase.